A 642-amino-acid chain; its full sequence is Mini-chromosome maintenance complex-binding protein (642 aa).

Residues 151 to 161 are compositionally biased toward polar residues; it reads ARVSPSTSYTP. A disordered region spans residues 151–196; the sequence is ARVSPSTSYTPSRHKRSYEDDEDMDLQPSKQKEQHPGSRQAGGLGG. Position 154 is a phosphoserine (serine 154). Threonine 160 carries the post-translational modification Phosphothreonine. A phosphoserine mark is found at serine 167 and serine 298.

The protein belongs to the MCMBP family. Interacts with the MCM complex: associates with the MCM3-7 complex which lacks MCM2, while it does not interact with the MCM complex when MCM2 is present (MCM2-7 complex). Interacts with the RPA complex, when composed of all RPA1, RPA2 and RPA3 components, but not with RPA1 or RPA2 alone.

It localises to the nucleus. In terms of biological role, associated component of the MCM complex that acts as a regulator of DNA replication. Binds to the MCM complex during late S phase and promotes the disassembly of the MCM complex from chromatin, thereby acting as a key regulator of pre-replication complex (pre-RC) unloading from replicated DNA. Can dissociate the MCM complex without addition of ATP; probably acts by destabilizing interactions of each individual subunits of the MCM complex. Required for sister chromatid cohesion. This chain is Mini-chromosome maintenance complex-binding protein (Mcmbp), found in Mus musculus (Mouse).